The following is a 685-amino-acid chain: Mannan-binding lectin serine protease 2 (685 aa).

Residues 1–19 form the signal peptide; the sequence is MRLLIVLGLLWSLVATLLG. One can recognise a CUB 1 domain in the interval 20–137; sequence SKWPEPVFGR…TGFEAFYAAE (118 aa). Residues Glu67 and Asp75 each contribute to the Ca(2+) site. Residues Cys72 and Cys90 are joined by a disulfide bond. The N-linked (GlcNAc...) asparagine glycan is linked to Asn103. Residues Asp120, Ser122, Asn123, Asp138, and Val139 each contribute to the Ca(2+) site. The EGF-like; calcium-binding domain maps to 138–181; sequence DVDECRTSLGDSVPCDHYCHNYLGGYYCSCRVGYILHQNKHTCS. 4 disulfide bridges follow: Cys152–Cys165, Cys167–Cys180, Cys184–Cys211, and Cys241–Cys259. Asn158 is subject to (3R)-3-hydroxyasparagine. Positions 159 and 162 each coordinate Ca(2+). The 113-residue stretch at 184 to 296 folds into the CUB 2 domain; the sequence is CSGQVFTGRS…TGWKIHYTST (113 aa). Asn285 is a glycosylation site (N-linked (GlcNAc...) asparagine). Sushi domains follow at residues 298 to 363 and 364 to 431; these read QPCP…ECSI and IDCG…VCKP. Disulfide bonds link Cys300–Cys348, Cys328–Cys361, Cys366–Cys411, Cys396–Cys429, Cys433–Cys551, Cys597–Cys617, and Cys628–Cys659. Positions 444 to 683 constitute a Peptidase S1 domain; sequence IIGGQPAKPG…YIPWIENIIN (240 aa). Active-site charge relay system residues include His482 and Asp531. Residue Ser632 is the Charge relay system of the active site. The N-linked (GlcNAc...) asparagine glycan is linked to Asn641.

The protein belongs to the peptidase S1 family. Homodimer; disulfide-linked. Binds MBL2. Isoform 2 binds to MASP1. Binds SERPING1. Post-translationally, N-glycosylated. The iron and 2-oxoglutarate dependent 3-hydroxylation of aspartate and asparagine is (R) stereospecific within EGF domains. Highly expressed in liver. Secreted in plasma.

Its subcellular location is the secreted. It catalyses the reaction Selective cleavage after Arg-223 in complement component C2 (-Ser-Leu-Gly-Arg-|-Lys-Ile-Gln-Ile) and after Arg-76 in complement component C4 (-Gly-Leu-Gln-Arg-|-Ala-Leu-Glu-Ile).. Functionally, serum protease that plays an important role in the activation of the complement system via mannose-binding lectin. After activation by auto-catalytic cleavage it cleaves C2 and C4, leading to their activation and to the formation of C3 convertase. The protein is Mannan-binding lectin serine protease 2 (Masp2) of Rattus norvegicus (Rat).